Consider the following 602-residue polypeptide: Glutamine--fructose-6-phosphate aminotransferase [isomerizing] (602 aa).

C2 serves as the catalytic Nucleophile; for GATase activity. Positions 2 to 217 (CGIVGVVGNT…DQELVIVKAD (216 aa)) constitute a Glutamine amidotransferase type-2 domain. Residues 67–87 (IGHTRWATHGKPTEDNAHPHR) form a disordered region. Positions 77-87 (KPTEDNAHPHR) are enriched in basic and acidic residues. SIS domains lie at 283 to 422 (IIKA…ANGN) and 455 to 592 (VREL…VDKP). The active-site For Fru-6P isomerization activity is the K597.

As to quaternary structure, homodimer.

It is found in the cytoplasm. The enzyme catalyses D-fructose 6-phosphate + L-glutamine = D-glucosamine 6-phosphate + L-glutamate. Catalyzes the first step in hexosamine metabolism, converting fructose-6P into glucosamine-6P using glutamine as a nitrogen source. In Streptococcus pneumoniae (strain ATCC BAA-255 / R6), this protein is Glutamine--fructose-6-phosphate aminotransferase [isomerizing].